The sequence spans 213 residues: Protein brother (213 aa).

The tract at residues histidine 189–tryptophan 213 is disordered. Positions glycine 203 to tryptophan 213 are enriched in gly residues.

It belongs to the CBF-beta family.

It localises to the nucleus. Functionally, regulates the DNA-binding properties of Runt. The chain is Protein brother (Bro) from Drosophila melanogaster (Fruit fly).